The chain runs to 104 residues: Gastrin (104 aa).

Residues 1–21 (MPRLCVCMLVLVLALATFSEA) form the signal peptide. A propeptide spanning residues 22–58 (SWKPRSQLQDASSGPRTNGALEQHQLEKLGPASHHRR) is cleaved from the precursor. A disordered region spans residues 23–104 (WKPRSQLQDA…RSAEEEDQYN (82 aa)). Residues 25-37 (PRSQLQDASSGPR) are compositionally biased toward polar residues. The residue at position 87 (Y87) is a Sulfotyrosine. F92 is modified (phenylalanine amide). A Phosphoserine modification is found at S96. A propeptide spanning residues 96–104 (SAEEEDQYN) is cleaved from the precursor. Y103 carries the sulfotyrosine modification.

The protein belongs to the gastrin/cholecystokinin family. Post-translationally, sulfation on Tyr-87 enhances proteolytic processing, and blocks peptide degradation. Levels of sulfation differ between proteolytically-cleaved gastrins and between tissues.

It localises to the secreted. In terms of biological role, gastrin stimulates the stomach mucosa to produce and secrete hydrochloric acid and the pancreas to secrete its digestive enzymes. It also stimulates smooth muscle contraction and increases blood circulation and water secretion in the stomach and intestine. This chain is Gastrin (Gast), found in Rattus norvegicus (Rat).